Consider the following 745-residue polypeptide: ATP-dependent zinc metalloprotease FtsH (745 aa).

The Cytoplasmic portion of the chain corresponds to 1 to 11 (MNNRRNGLFRN). A helical membrane pass occupies residues 12–32 (SLFYILMFLSLMGIIYFFFGG). The Extracellular portion of the chain corresponds to 33-131 (NSGSQTQNIR…VTAKAEESSG (99 aa)). The chain crosses the membrane as a helical span at residues 132-152 (IWVTLLMYIAPVILMLFLFYM). Residues 153 to 745 (MMGQAGQGGG…SSQDDTNSQA (593 aa)) are Cytoplasmic-facing. 227–234 (GPPGTGKT) is an ATP binding site. Histidine 449 contributes to the Zn(2+) binding site. Glutamate 450 is an active-site residue. The Zn(2+) site is built by histidine 453 and aspartate 525. Residues 630-673 (MPEKDSNEFPSEKAATFEESKRELERREAEKHAQNQSADDKQAD) show a composition bias toward basic and acidic residues. The interval 630 to 745 (MPEKDSNEFP…SSQDDTNSQA (116 aa)) is disordered. The span at 690-704 (SESDASSEVSADSSV) shows a compositional bias: low complexity. The segment covering 705 to 745 (NSTANSATESATDSDVATSATGLPNAESATPSSQDDTNSQA) has biased composition (polar residues).

This sequence in the central section; belongs to the AAA ATPase family. It in the C-terminal section; belongs to the peptidase M41 family. In terms of assembly, homohexamer. Zn(2+) serves as cofactor.

Its subcellular location is the cell membrane. Its function is as follows. Acts as a processive, ATP-dependent zinc metallopeptidase for both cytoplasmic and membrane proteins. Plays a role in the quality control of integral membrane proteins. This is ATP-dependent zinc metalloprotease FtsH from Lactiplantibacillus plantarum (strain ATCC BAA-793 / NCIMB 8826 / WCFS1) (Lactobacillus plantarum).